A 340-amino-acid polypeptide reads, in one-letter code: Fructose-1,6-bisphosphatase class 1 (340 aa).

The Mg(2+) site is built by Glu-107, Asp-126, Leu-128, and Asp-129. Asn-215 lines the substrate pocket. Glu-287 contacts Mg(2+).

It belongs to the FBPase class 1 family. Homotetramer. Mg(2+) serves as cofactor.

It is found in the cytoplasm. The enzyme catalyses beta-D-fructose 1,6-bisphosphate + H2O = beta-D-fructose 6-phosphate + phosphate. The protein operates within carbohydrate biosynthesis; gluconeogenesis. This is Fructose-1,6-bisphosphatase class 1 from Brucella suis biovar 1 (strain 1330).